Consider the following 358-residue polypeptide: UDP-N-acetylglucosamine--N-acetylmuramyl-(pentapeptide) pyrophosphoryl-undecaprenol N-acetylglucosamine transferase (358 aa).

Residues 11–13 (TAG), asparagine 125, arginine 162, serine 196, and glutamine 288 contribute to the UDP-N-acetyl-alpha-D-glucosamine site.

This sequence belongs to the glycosyltransferase 28 family. MurG subfamily.

It is found in the cell membrane. The catalysed reaction is di-trans,octa-cis-undecaprenyl diphospho-N-acetyl-alpha-D-muramoyl-L-alanyl-D-glutamyl-meso-2,6-diaminopimeloyl-D-alanyl-D-alanine + UDP-N-acetyl-alpha-D-glucosamine = di-trans,octa-cis-undecaprenyl diphospho-[N-acetyl-alpha-D-glucosaminyl-(1-&gt;4)]-N-acetyl-alpha-D-muramoyl-L-alanyl-D-glutamyl-meso-2,6-diaminopimeloyl-D-alanyl-D-alanine + UDP + H(+). It functions in the pathway cell wall biogenesis; peptidoglycan biosynthesis. Its function is as follows. Cell wall formation. Catalyzes the transfer of a GlcNAc subunit on undecaprenyl-pyrophosphoryl-MurNAc-pentapeptide (lipid intermediate I) to form undecaprenyl-pyrophosphoryl-MurNAc-(pentapeptide)GlcNAc (lipid intermediate II). In Leifsonia xyli subsp. xyli (strain CTCB07), this protein is UDP-N-acetylglucosamine--N-acetylmuramyl-(pentapeptide) pyrophosphoryl-undecaprenol N-acetylglucosamine transferase.